We begin with the raw amino-acid sequence, 285 residues long: Extracellular metalloprotease NCU07200 (285 aa).

A signal peptide spans Met-1–Gly-18. His-197 lines the Zn(2+) pocket. The active site involves Glu-198. His-201 provides a ligand contact to Zn(2+). A disulfide bond links Cys-233 and Cys-260. N-linked (GlcNAc...) asparagine glycosylation is present at Asn-282.

It belongs to the peptidase M43B family.

It is found in the secreted. In terms of biological role, secreted metalloproteinase that allows assimilation of proteinaceous substrates. The protein is Extracellular metalloprotease NCU07200 of Neurospora crassa (strain ATCC 24698 / 74-OR23-1A / CBS 708.71 / DSM 1257 / FGSC 987).